A 224-amino-acid polypeptide reads, in one-letter code: Thiamine-phosphate synthase (224 aa).

Residues 44–48 and N79 contribute to the 4-amino-2-methyl-5-(diphosphooxymethyl)pyrimidine site; that span reads QFREK. The Mg(2+) site is built by D80 and D99. S117 provides a ligand contact to 4-amino-2-methyl-5-(diphosphooxymethyl)pyrimidine. 143 to 145 provides a ligand contact to 2-[(2R,5Z)-2-carboxy-4-methylthiazol-5(2H)-ylidene]ethyl phosphate; that stretch reads TST. K146 serves as a coordination point for 4-amino-2-methyl-5-(diphosphooxymethyl)pyrimidine. 2-[(2R,5Z)-2-carboxy-4-methylthiazol-5(2H)-ylidene]ethyl phosphate is bound by residues G175 and 195–196; that span reads IS.

It belongs to the thiamine-phosphate synthase family. It depends on Mg(2+) as a cofactor.

It carries out the reaction 2-[(2R,5Z)-2-carboxy-4-methylthiazol-5(2H)-ylidene]ethyl phosphate + 4-amino-2-methyl-5-(diphosphooxymethyl)pyrimidine + 2 H(+) = thiamine phosphate + CO2 + diphosphate. The catalysed reaction is 2-(2-carboxy-4-methylthiazol-5-yl)ethyl phosphate + 4-amino-2-methyl-5-(diphosphooxymethyl)pyrimidine + 2 H(+) = thiamine phosphate + CO2 + diphosphate. It catalyses the reaction 4-methyl-5-(2-phosphooxyethyl)-thiazole + 4-amino-2-methyl-5-(diphosphooxymethyl)pyrimidine + H(+) = thiamine phosphate + diphosphate. It participates in cofactor biosynthesis; thiamine diphosphate biosynthesis; thiamine phosphate from 4-amino-2-methyl-5-diphosphomethylpyrimidine and 4-methyl-5-(2-phosphoethyl)-thiazole: step 1/1. Its function is as follows. Condenses 4-methyl-5-(beta-hydroxyethyl)thiazole monophosphate (THZ-P) and 2-methyl-4-amino-5-hydroxymethyl pyrimidine pyrophosphate (HMP-PP) to form thiamine monophosphate (TMP). The chain is Thiamine-phosphate synthase from Bacillus cereus (strain ATCC 10987 / NRS 248).